The sequence spans 470 residues: Putative ankyrin repeat protein L279 (470 aa).

ANK repeat units lie at residues 119–148, 149–178, 372–401, and 403–431; these read RDDYMLEWACAGNFTEVARYLLKIGANPGT, NKYACFESAVRNGNYDMVKLLLENIPGSDK, ETQGLLTNACQYNNSELVKYLLEKGANVNE, and NGKPLREAIKNNNKDIIKNLMDYSPDISL.

The sequence is that of Putative ankyrin repeat protein L279 from Acanthamoeba polyphaga (Amoeba).